A 77-amino-acid chain; its full sequence is Secapin (77 aa).

Residues 1–32 form the signal peptide; sequence MKNYSKNATYLITVLLFSFVAMLLIIPSKCEA. Positions 33–52 are excised as a propeptide; it reads VSNDMQPLEARTADLVQQPR. C61 and C72 form a disulfide bridge.

This sequence belongs to the secapin family. Expressed by the venom gland.

It localises to the secreted. In terms of biological role, nontoxic peptide. This is Secapin from Apis cerana cerana (Oriental honeybee).